A 1847-amino-acid polypeptide reads, in one-letter code: Peripheral-type benzodiazepine receptor-associated protein 1 (1847 aa).

Disordered regions lie at residues 57–81, 282–318, and 560–626; these read EESS…GTET, NQRE…EDDV, and SGPK…DTAS. Low complexity-rich tracts occupy residues 294–310 and 600–613; these read GSTA…GAPG and SLSN…IHNS. The region spanning 651–718 is the SH3 1 domain; it reads ARIQVFLARY…PSNFVERVSD (68 aa). The interval 728–787 is disordered; the sequence is ELADSSHSSGPELSFLSGGGGGCSSGGQSSGGRSQPRPEEEATGDELSLSPPPEGLGEPL. The span at 744 to 757 shows a compositional bias: gly residues; sequence SGGGGGCSSGGQSS. Fibronectin type-III domains follow at residues 789 to 880, 882 to 974, and 979 to 1077; these read VPYP…AGAG, VPSQ…TLPA, and APLD…PALA. Disordered stretches follow at residues 1107–1174, 1191–1215, 1240–1307, 1322–1478, and 1514–1616; these read LGYT…EGPD, DAGP…VCHR, NSLV…ILEQ, FSIP…ESSL, and PTDG…SHQD. Over residues 1122-1133 the composition is skewed to polar residues; sequence TQDSPASLSTEM. Over residues 1203-1215 the composition is skewed to basic and acidic residues; it reads LTQKEPSTEVCHR. The segment covering 1253 to 1266 has biased composition (acidic residues); it reads DIQEEEEEEEEEEE. Residues 1272–1284 show a composition bias toward polar residues; it reads WSFQKQVAGNSIG. 2 stretches are compositionally biased toward acidic residues: residues 1296 to 1305 and 1325 to 1335; these read CETDSDEEIL and PEEEEEEDEEE. Positions 1340–1352 are enriched in low complexity; it reads PGPSSSSQDPSQP. Composition is skewed to basic and acidic residues over residues 1412 to 1421 and 1546 to 1578; these read RPQDPREHCS and AWEK…ESRG. Positions 1617-1685 constitute an SH3 2 domain; that stretch reads LPLRVFVALF…PCNMVAEVAV (69 aa). 2 disordered regions span residues 1701-1747 and 1818-1847; these read PPNV…PGPP and LEGP…RVQC. The 68-residue stretch at 1756–1823 folds into the SH3 3 domain; the sequence is KTSRPMVAAF…PSNFLEGPGP (68 aa).

The protein belongs to the RIMBP family. In terms of assembly, interacts with RIMS1 and RIMS2. Interacts with TSPO. Interacts with CACNA1A. Specifically expressed in brain. High expression level in the limbic system such as the nucleus accumbens, septum, and hippocampus, as well as on the cerebellum and pineal gland. Abundant in the CA1 region of the hippocampus.

It localises to the cytoplasm. The protein localises to the mitochondrion. In terms of biological role, required for synaptic transmission regulation. It probably controls the recruitement of voltage-gated calcium channels to the presynaptic membrane, and modulates neurotransmitter release. The polypeptide is Peripheral-type benzodiazepine receptor-associated protein 1 (Rattus norvegicus (Rat)).